The following is a 1037-amino-acid chain: MDRARPGRRRASSEIVTEGKRKKSSPADLQKITKLLTVKSEDVLAQSPLSKLRGSECWWTRSLRNKVICLDHKKPKAARGCPPKGLPKRHLRVMLTNVLWTDLGREFRKTLPRKDANLCAPSKVQSDSLPSTSVDSIETCQRLDPLHQSLNLSERTPRVILTDIRQTELGRKYLKIPPVTEASLSDTANLKSEQLSSSSDGSLESCQSVNHHKSFLSESGPKPSRTGDVPAKEAACGGQKQGDDGGVTPEMAAPHPKDFNTGNKGCDYLEEGTSNKNTSYSYSEMDHTPVSRKRKKRGRSNFHDSHNSKTSLDKPTEHTKEEENDSSVSRKLEESGEDSHQDPAPPEGLAPESLESEATNLRSFAAGQEPDASAASGRASSPNKSLESSASSEVSENSSVAVKGEALTLKEASPPGGSSEESQLLISAEPIVVSSDEEGPVEHKNSVILKLQPPHEIMSENQGTSDPQLSELTLGACESVQVTSELFPYNPDVENISCIKSNSEMDLKLDFIFTCVYIGKIKGTPKGCVTFTKKYIKIPFQVSTNEISLTVDTARLKRFGLWESKDEDHSKRSHAILFLWLSSDYLQDIQTQLENPMLSQQSKANEFIFLELNSSISQREELKLKDIMMEISTKNGNLHLSCPLPWVQALPLFQDLSPQEISFLHYYYASASALPTAAGADMKKKSVSQPSNSDTIKPTYTFLHKQSSGCYSLSITSSPEEEWQEVRNTGPVQKLIVYPPPPTKGGLGVTNEDLECLEEGEFLNDVIIDFYLKYLLLEKASDELVERSHIFSSFFYKCLTRKENNLTEDNPDLSVAQRRHRRVRTWTRHINIFNKDYIFVPVNESSHWYLAVICFPWLEEAVYEDCPQTVSQQFQGQQSQHDHKMTDNDPHTTSTVSTSAEDSQSTEVNMSVPKKMCKRPCILILDSLKAASIQNTVQNLREYLEVEWEVKRKTHREFSKTNMVDLCPKVPKQDNSSDCGVYLLQYVESFFQDPIVNFELPIHLEKWFPRHVIKTKREDIRELILKLHLQQQKGGSC.

Basic residues predominate over residues 1 to 10; sequence MDRARPGRRR. Disordered stretches follow at residues 1-27 and 185-399; these read MDRA…SSPA and SDTA…ENSS. Phosphoserine occurs at positions 12, 13, and 25. Positions 192–208 are enriched in low complexity; sequence SEQLSSSSDGSLESCQS. Over residues 272–282 the composition is skewed to polar residues; sequence GTSNKNTSYSY. Basic residues predominate over residues 290–300; sequence VSRKRKKRGRS. Basic and acidic residues-rich tracts occupy residues 301-321 and 328-341; these read NFHD…HTKE and VSRK…DSHQ. The segment covering 379 to 399 has biased composition (low complexity); the sequence is ASSPNKSLESSASSEVSENSS. A phosphoserine mark is found at Ser434 and Ser435. A protease region spans residues 747-1037; the sequence is LGVTNEDLEC…HLQQQKGGSC (291 aa). His847 is a catalytic residue. Residues 873 to 909 form a disordered region; it reads QFQGQQSQHDHKMTDNDPHTTSTVSTSAEDSQSTEVN. A compositionally biased stretch (basic and acidic residues) spans 880-890; the sequence is QHDHKMTDNDP. A compositionally biased stretch (polar residues) spans 891–909; sequence HTTSTVSTSAEDSQSTEVN. Residue Asp926 is part of the active site. Residue Cys979 is the Nucleophile of the active site.

The protein belongs to the peptidase C48 family.

It localises to the cytoplasm. Functionally, protease that acts as a positive regulator of the cGAS-STING pathway by catalyzing desumoylation of CGAS. Desumoylation of CGAS promotes DNA-binding activity of CGAS, subsequent oligomerization and activation. Deconjugates SUMO2 and SUMO3 from targeted proteins, but not SUMO1. Catalyzes the deconjugation of poly-SUMO2 and poly-SUMO3 chains. Has very low efficiency in processing full-length SUMO proteins to their mature forms. This chain is Sentrin-specific protease 7, found in Mus musculus (Mouse).